The primary structure comprises 461 residues: Fumarate hydratase class II (461 aa).

Substrate contacts are provided by residues 98-100 (SGT), 129-132 (HPND), 139-141 (SSN), and T187. The active-site Proton donor/acceptor is the H188. Residue S318 is part of the active site. Substrate is bound by residues S319 and 324–326 (KVN).

The protein belongs to the class-II fumarase/aspartase family. Fumarase subfamily. As to quaternary structure, homotetramer.

Its subcellular location is the cytoplasm. It catalyses the reaction (S)-malate = fumarate + H2O. The protein operates within carbohydrate metabolism; tricarboxylic acid cycle; (S)-malate from fumarate: step 1/1. Involved in the TCA cycle. Catalyzes the stereospecific interconversion of fumarate to L-malate. In Rickettsia prowazekii (strain Madrid E), this protein is Fumarate hydratase class II.